The primary structure comprises 611 residues: tRNA uridine 5-carboxymethylaminomethyl modification enzyme MnmG (611 aa).

FAD-binding positions include 8–13 (GAGHAG), valine 120, and serine 175. 268–282 (GPRYCPSIEDKIVRF) is a binding site for NAD(+). Glutamine 365 contacts FAD.

It belongs to the MnmG family. In terms of assembly, homodimer. Heterotetramer of two MnmE and two MnmG subunits. FAD serves as cofactor.

The protein resides in the cytoplasm. Functionally, NAD-binding protein involved in the addition of a carboxymethylaminomethyl (cmnm) group at the wobble position (U34) of certain tRNAs, forming tRNA-cmnm(5)s(2)U34. This is tRNA uridine 5-carboxymethylaminomethyl modification enzyme MnmG from Mycoplasmoides gallisepticum (strain R(low / passage 15 / clone 2)) (Mycoplasma gallisepticum).